The chain runs to 307 residues: Probable GTP 3',8-cyclase (307 aa).

In terms of domain architecture, Radical SAM core spans 5–231 (RFGRPVTNLR…MHRRKKYFIP (227 aa)). Arg-14 serves as a coordination point for GTP. The [4Fe-4S] cluster site is built by Cys-21, Cys-25, and Cys-28. Lys-62 is a binding site for GTP. Gly-66 is a binding site for S-adenosyl-L-methionine. Thr-91 provides a ligand contact to GTP. An S-adenosyl-L-methionine-binding site is contributed by Ser-115. Lys-151 contributes to the GTP binding site. Met-190 lines the S-adenosyl-L-methionine pocket. 2 residues coordinate [4Fe-4S] cluster: Cys-251 and Cys-254. 256–258 (RLR) is a GTP binding site. A [4Fe-4S] cluster-binding site is contributed by Cys-268.

This sequence belongs to the radical SAM superfamily. MoaA family. The cofactor is [4Fe-4S] cluster.

It catalyses the reaction GTP + AH2 + S-adenosyl-L-methionine = (8S)-3',8-cyclo-7,8-dihydroguanosine 5'-triphosphate + 5'-deoxyadenosine + L-methionine + A + H(+). It functions in the pathway cofactor biosynthesis; molybdopterin biosynthesis. Its function is as follows. Catalyzes the cyclization of GTP to (8S)-3',8-cyclo-7,8-dihydroguanosine 5'-triphosphate. The protein is Probable GTP 3',8-cyclase of Thermococcus kodakarensis (strain ATCC BAA-918 / JCM 12380 / KOD1) (Pyrococcus kodakaraensis (strain KOD1)).